The following is a 220-amino-acid chain: Adapter protein MecA (220 aa).

The protein belongs to the MecA family. In terms of assembly, homodimer.

Enables the recognition and targeting of unfolded and aggregated proteins to the ClpC protease or to other proteins involved in proteolysis. The protein is Adapter protein MecA of Enterococcus faecalis (strain ATCC 700802 / V583).